A 742-amino-acid polypeptide reads, in one-letter code: Clamp-binding protein CrfC (742 aa).

The clamp-binding consensus stretch occupies residues 41–45 (QLALP). Positions 66–402 (SRLEMVLAIV…LWEDSLFAQP (337 aa)) constitute a Dynamin-type G domain. Positions 76–83 (GTMKAGKS) are G1 motif. The tract at residues 102–104 (MTA) is G2 motif. The G3 motif stretch occupies residues 236-239 (DTPG). Residues 297-300 (NKFD) are G4 motif. Residues 331–334 (FPVS) form a G5 motif region. Residues 440-472 (RAHGLNVACEQLRQNIHQIEESLQLLQLNQAQV) are a coiled coil.

The protein belongs to the TRAFAC class dynamin-like GTPase superfamily. Dynamin/Fzo/YdjA family. Forms homooligomers. Binds to the beta sliding clamp processivity factor (DnaN) in the presence and absence of DNA, may bind to the clamp itself as homodimers or trimers. Homooligomers may be able to bind more than 1 clamp complex.

Its subcellular location is the cytoplasm. Its function is as follows. Important for the colocalization of sister nascent DNA strands after replication fork passage during DNA replication, and for positioning and subsequent partitioning of sister chromosomes. Does not have GTPase activity on its own. This chain is Clamp-binding protein CrfC (crfC), found in Escherichia coli (strain K12).